The sequence spans 184 residues: Photosystem I assembly protein Ycf4 (184 aa).

The next 2 helical transmembrane spans lie at 21 to 43 (NFFW…SSSY) and 58 to 80 (VFIP…GFYL).

It belongs to the Ycf4 family.

It is found in the plastid. Its subcellular location is the chloroplast thylakoid membrane. Its function is as follows. Seems to be required for the assembly of the photosystem I complex. The protein is Photosystem I assembly protein Ycf4 of Psilotum nudum (Whisk fern).